Reading from the N-terminus, the 458-residue chain is Putative U-box domain-containing protein 46 (458 aa).

The U-box domain occupies 71 to 144; it reads EVPKEFICTL…TQWCLVNKYD (74 aa). 2 ARM repeats span residues 241 to 281 and 283 to 322; these read ESNK…SLSA and DSNK…NLCI.

The catalysed reaction is S-ubiquitinyl-[E2 ubiquitin-conjugating enzyme]-L-cysteine + [acceptor protein]-L-lysine = [E2 ubiquitin-conjugating enzyme]-L-cysteine + N(6)-ubiquitinyl-[acceptor protein]-L-lysine.. Its pathway is protein modification; protein ubiquitination. Functions as an E3 ubiquitin ligase. The polypeptide is Putative U-box domain-containing protein 46 (PUB46) (Arabidopsis thaliana (Mouse-ear cress)).